Reading from the N-terminus, the 413-residue chain is Ribosomal RNA large subunit methyltransferase G (413 aa).

The tract at residues 389-413 (EAEVEQAFDTETPHPQSALYGKPKA) is disordered.

The protein belongs to the methyltransferase superfamily. RlmG family.

The protein localises to the cytoplasm. It catalyses the reaction guanosine(1835) in 23S rRNA + S-adenosyl-L-methionine = N(2)-methylguanosine(1835) in 23S rRNA + S-adenosyl-L-homocysteine + H(+). In terms of biological role, specifically methylates the guanine in position 1835 (m2G1835) of 23S rRNA. This is Ribosomal RNA large subunit methyltransferase G from Shewanella pealeana (strain ATCC 700345 / ANG-SQ1).